Reading from the N-terminus, the 445-residue chain is Aminopeptidase S (445 aa).

The N-terminal stretch at 1-45 is a signal peptide; it reads MRPNRFSLRRSPTAVAAVALAAVLAAGAPAAQAAGAAAPTAAAAA. Ca(2+) is bound by residues aspartate 48 and isoleucine 49. Residues histidine 130 and aspartate 142 each contribute to the Zn(2+) site. The Proton acceptor role is filled by glutamate 176. Glutamate 177, aspartate 205, and histidine 292 together coordinate Zn(2+). A disulfide bond links cysteine 290 and cysteine 295. Ca(2+)-binding residues include aspartate 307 and aspartate 311. The 121-residue stretch at 325-445 folds into the P/Homo B domain; that stretch reads GEPPTGEGVF…GYIDSWKLTF (121 aa). A propeptide spans 330–445 (removed in mature form); that stretch reads GEGVFSNTTD…GYIDSWKLTF (116 aa).

Belongs to the peptidase M28 family. M28A subfamily. Monomer. Ca(2+) is required as a cofactor. The cofactor is Zn(2+). It depends on Mn(2+) as a cofactor. Co(2+) serves as cofactor.

It localises to the secreted. The catalysed reaction is Release of an N-terminal amino acid with a preference for large hydrophobic amino-terminus residues.. With respect to regulation, calcium activates the enzyme, inhibited by 1,10-phenanthroline, EDTA and EGTA. End-product inhibited by L-amino acids. Non-competitively inhibited by NaF and NaH(2)PO(4). In terms of biological role, an exopeptidase specific for larger hydrophobic amino acids (especially leucine), no cleavage occurs if the next residue is proline. The protein is Aminopeptidase S of Streptomyces griseus subsp. griseus (strain JCM 4626 / CBS 651.72 / NBRC 13350 / KCC S-0626 / ISP 5235).